Reading from the N-terminus, the 483-residue chain is Protein EFFECTOR OF TRANSCRIPTION 2 (483 aa).

A GIY-YIG domain is found at 64–112 (SCPGLYELGVAVIGQEQCRKLEPDIVLASYLGQAESVRSRLQRYGRSGA). Cx9Cx9RCx2HK repeat units lie at residues 278–303 (CGVL…IEHK) and 338–363 (CGVI…EDHK). Basic and acidic residues predominate over residues 380-396 (EKTVKDEKPDPESHTES). Residues 380–399 (EKTVKDEKPDPESHTESIEE) are disordered. 2 Cx9Cx9RCx2HK repeats span residues 406–431 (CEAT…WQHK) and 453–478 (CGVK…EEHK).

Expressed in vascular tissues of stems, hypocotyls, leaves and flowers. Expressed in the vascular bundles of xylem in shoot parenchyma cells. Expressed in the remnant cytoplasm of differentiated fiber cells and in protoxylem element of parenchymal cells.

The protein localises to the cytoplasm. It localises to the nucleus. Functionally, transcriptional regulator involved in the regulation of cell differentiation in meristems. Probably regulates the expression of various KNAT genes involved in the maintenance of the cells in an undifferentiated, merismastic state. Plays a role in the regulation of gibberellin 20 oxidase and the gibberellin-regulated protein GASA4. Localizes in the nucleus during the cellular differentiation state and may act via a single strand cutting domain. Transcriptional regulator required for the induction of dormancy during late seed development. Interacts genetically with FUS3 and may be component of the same regulatory pathway during embryogenesis. Binds both linear and supercoiled DNA without sequence preference. The sequence is that of Protein EFFECTOR OF TRANSCRIPTION 2 from Arabidopsis thaliana (Mouse-ear cress).